A 628-amino-acid chain; its full sequence is Biosynthetic arginine decarboxylase (628 aa).

K99 carries the post-translational modification N6-(pyridoxal phosphate)lysine. 279–289 lines the substrate pocket; sequence VDVGGGLGIDY.

Belongs to the Orn/Lys/Arg decarboxylase class-II family. SpeA subfamily. It depends on Mg(2+) as a cofactor. Requires pyridoxal 5'-phosphate as cofactor.

The enzyme catalyses L-arginine + H(+) = agmatine + CO2. Functionally, catalyzes the biosynthesis of agmatine from arginine. The polypeptide is Biosynthetic arginine decarboxylase (Xanthomonas axonopodis pv. citri (strain 306)).